Here is a 514-residue protein sequence, read N- to C-terminus: Na(+)/H(+) antiporter NhaB (514 aa).

12 helical membrane passes run 23 to 43 (LALL…PFIA), 63 to 83 (PLLP…TSAA), 97 to 117 (LLLM…LFIF), 120 to 140 (LLLS…AAAF), 144 to 164 (FLDA…FYGI), 202 to 222 (LMMH…VGEP), 238 to 258 (FFLR…LTCM), 303 to 323 (AIIG…VGLI), 357 to 377 (LTVF…APII), 391 to 411 (LFYL…VGTI), 447 to 467 (ATPN…APLI), and 475 to 495 (VWMA…CVEF).

The protein belongs to the NhaB Na(+)/H(+) (TC 2.A.34) antiporter family.

It is found in the cell inner membrane. It carries out the reaction 2 Na(+)(in) + 3 H(+)(out) = 2 Na(+)(out) + 3 H(+)(in). Functionally, na(+)/H(+) antiporter that extrudes sodium in exchange for external protons. This Salmonella paratyphi B (strain ATCC BAA-1250 / SPB7) protein is Na(+)/H(+) antiporter NhaB.